Consider the following 251-residue polypeptide: Sugar fermentation stimulation protein homolog (251 aa).

It belongs to the SfsA family.

The sequence is that of Sugar fermentation stimulation protein homolog from Yersinia pseudotuberculosis serotype O:1b (strain IP 31758).